The following is a 339-amino-acid chain: Erlin-2 (339 aa).

Topologically, residues 1–3 are cytoplasmic; sequence MAQ. The helical transmembrane segment at 4–24 threads the bilayer; that stretch reads LGAVVAVASSFFCASLFSAVH. At 25-339 the chain is on the extracellular side; the sequence is KIEEGHIGVY…EPLETATKDN (315 aa). N106 is a glycosylation site (N-linked (GlcNAc...) asparagine). The tract at residues 177-309 is interaction with ERLIN1; that stretch reads EAIRRNYELM…DIPNMFMDSA (133 aa). K267 is modified (N6-acetyllysine).

It belongs to the band 7/mec-2 family. As to quaternary structure, forms a heteromeric complex with ERLIN1. In complex with ERLIN1, interacts with RNF170. Interacts with activated ITPR1, independently of the degree of ITPR1 polyubiquitination. Interacts with SCAP, INSIG1, SREBF1 and SREBF2 under cholesterol sufficiency conditions; indicative for an association with the SCAP-SREBP-INSIG complex. Probably part of an AMFR/gp78 and INSIG1-containing ubiquitin ligase complex involved in ERAD of HMGCR. Interacts with TMUB1; TMUB1 bridges the association with AMFR. Interacts with SYVN1 and RNF139. Interacts with TMEM259. Interacts with TMEM41B. Deubiquitinated by USP25; leading to stabilization.

The protein localises to the endoplasmic reticulum membrane. Functionally, component of the ERLIN1/ERLIN2 complex which mediates the endoplasmic reticulum-associated degradation (ERAD) of inositol 1,4,5-trisphosphate receptors (IP3Rs) such as ITPR1. Promotes sterol-accelerated ERAD of HMGCR probably implicating an AMFR/gp78-containing ubiquitin ligase complex. Involved in regulation of cellular cholesterol homeostasis by regulation the SREBP signaling pathway. May promote ER retention of the SCAP-SREBF complex. This chain is Erlin-2, found in Rattus norvegicus (Rat).